We begin with the raw amino-acid sequence, 339 residues long: Ketol-acid reductoisomerase (NADP(+)) (339 aa).

The KARI N-terminal Rossmann domain maps to 1–182; sequence MRVYYDRDAD…GGGRSGIIET (182 aa). NADP(+)-binding positions include 24–27, Arg-48, Ser-51, Thr-53, and 83–86; these read YGSQ and DEHQ. Residue His-108 is part of the active site. Gly-134 provides a ligand contact to NADP(+). The KARI C-terminal knotted domain occupies 183–328; it reads NFREECETDL…ARLRGMMPWI (146 aa). Residues Asp-191, Glu-195, Glu-227, and Glu-231 each contribute to the Mg(2+) site. Ser-252 contributes to the substrate binding site.

It belongs to the ketol-acid reductoisomerase family. Mg(2+) is required as a cofactor.

The catalysed reaction is (2R)-2,3-dihydroxy-3-methylbutanoate + NADP(+) = (2S)-2-acetolactate + NADPH + H(+). The enzyme catalyses (2R,3R)-2,3-dihydroxy-3-methylpentanoate + NADP(+) = (S)-2-ethyl-2-hydroxy-3-oxobutanoate + NADPH + H(+). It functions in the pathway amino-acid biosynthesis; L-isoleucine biosynthesis; L-isoleucine from 2-oxobutanoate: step 2/4. The protein operates within amino-acid biosynthesis; L-valine biosynthesis; L-valine from pyruvate: step 2/4. Functionally, involved in the biosynthesis of branched-chain amino acids (BCAA). Catalyzes an alkyl-migration followed by a ketol-acid reduction of (S)-2-acetolactate (S2AL) to yield (R)-2,3-dihydroxy-isovalerate. In the isomerase reaction, S2AL is rearranged via a Mg-dependent methyl migration to produce 3-hydroxy-3-methyl-2-ketobutyrate (HMKB). In the reductase reaction, this 2-ketoacid undergoes a metal-dependent reduction by NADPH to yield (R)-2,3-dihydroxy-isovalerate. This is Ketol-acid reductoisomerase (NADP(+)) from Caulobacter vibrioides (strain ATCC 19089 / CIP 103742 / CB 15) (Caulobacter crescentus).